A 182-amino-acid chain; its full sequence is Putative manganese efflux pump MntP (182 aa).

Helical transmembrane passes span 6–26 (LIPL…VSLG), 37–57 (ILYI…IGMV), 72–92 (FAGA…SILE), 101–121 (IGIS…SVGL), 131–151 (IITI…GLLL), and 162–182 (YGEI…LFPI).

It belongs to the MntP (TC 9.B.29) family.

Its subcellular location is the cell membrane. In terms of biological role, probably functions as a manganese efflux pump. The polypeptide is Putative manganese efflux pump MntP (Bacillus mycoides (strain KBAB4) (Bacillus weihenstephanensis)).